We begin with the raw amino-acid sequence, 281 residues long: Very long chain fatty acid elongase 7 (281 aa).

Residue alanine 2 is modified to N-acetylalanine. Residues alanine 2–aspartate 27 lie on the Lumenal side of the membrane. A helical transmembrane segment spans residues tyrosine 28–valine 48. The Cytoplasmic segment spans residues threonine 49 to asparagine 72. The chain crosses the membrane as a helical span at residues phenylalanine 73–threonine 93. Residues glycine 94 to histidine 115 are Lumenal-facing. The cysteines at positions 99 and 231 are disulfide-linked. The helical transmembrane segment at threonine 116–leucine 136 threads the bilayer. 3-oxoeicosanoyl-CoA contacts are provided by lysine 124, arginine 137, lysine 139, glutamine 142, and histidine 147. The Cytoplasmic segment spans residues arginine 137–glutamine 142. Residues valine 143–valine 162 form a helical membrane-spanning segment. The HxxHH motif signature appears at histidine 147–histidine 151. The active-site Nucleophile is histidine 150. The Lumenal portion of the chain corresponds to lysine 163 to threonine 171. A helical transmembrane segment spans residues phenylalanine 172 to glycine 194. 3-oxoeicosanoyl-CoA contacts are provided by tyrosine 187, lysine 204, threonine 208, and glutamine 211. The Cytoplasmic segment spans residues proline 195–histidine 206. A helical membrane pass occupies residues leucine 207–phenylalanine 227. The Lumenal portion of the chain corresponds to methionine 228–proline 236. Residues valine 237–tryptophan 257 traverse the membrane as a helical segment. Residues tyrosine 258–histidine 281 are Cytoplasmic-facing. Arginine 266 is a 3-oxoeicosanoyl-CoA binding site. Residues lysine 277–histidine 281 carry the Di-lysine motif motif.

This sequence belongs to the ELO family. ELOVL7 subfamily. As to quaternary structure, homodimer. Interacts with TECR.

The protein localises to the endoplasmic reticulum membrane. The catalysed reaction is a very-long-chain acyl-CoA + malonyl-CoA + H(+) = a very-long-chain 3-oxoacyl-CoA + CO2 + CoA. It catalyses the reaction eicosanoyl-CoA + malonyl-CoA + H(+) = 3-oxodocosanoyl-CoA + CO2 + CoA. The enzyme catalyses (5Z,8Z,11Z,14Z)-eicosatetraenoyl-CoA + malonyl-CoA + H(+) = (7Z,10Z,13Z,16Z)-3-oxodocosatetraenoyl-CoA + CO2 + CoA. It carries out the reaction (6Z,9Z,12Z)-octadecatrienoyl-CoA + malonyl-CoA + H(+) = (8Z,11Z,14Z)-3-oxoeicosatrienoyl-CoA + CO2 + CoA. The catalysed reaction is (9Z,12Z)-octadecadienoyl-CoA + malonyl-CoA + H(+) = (11Z,14Z)-3-oxoicosa-11,14-dienoyl-CoA + CO2 + CoA. It catalyses the reaction (9Z)-octadecenoyl-CoA + malonyl-CoA + H(+) = 3-oxo-(11Z)-eicosenoyl-CoA + CO2 + CoA. The enzyme catalyses octadecanoyl-CoA + malonyl-CoA + H(+) = 3-oxoeicosanoyl-CoA + CO2 + CoA. It carries out the reaction hexadecanoyl-CoA + malonyl-CoA + H(+) = 3-oxooctadecanoyl-CoA + CO2 + CoA. The catalysed reaction is (9Z,12Z,15Z)-octadecatrienoyl-CoA + malonyl-CoA + H(+) = (11Z,14Z,17Z)-3-oxoeicosatrienoyl-CoA + CO2 + CoA. Its pathway is lipid metabolism; fatty acid biosynthesis. In terms of biological role, catalyzes the first and rate-limiting reaction of the four reactions that constitute the long-chain fatty acids elongation cycle. This endoplasmic reticulum-bound enzymatic process allows the addition of 2 carbons to the chain of long- and very long-chain fatty acids (VLCFAs) per cycle. Condensing enzyme with higher activity toward C18 acyl-CoAs, especially C18:3(n-3) acyl-CoAs and C18:3(n-6)-CoAs. Also active toward C20:4-, C18:0-, C18:1-, C18:2- and C16:0-CoAs, and weakly toward C20:0-CoA. Little or no activity toward C22:0-, C24:0-, or C26:0-CoAs. May participate in the production of saturated and polyunsaturated VLCFAs of different chain lengths that are involved in multiple biological processes as precursors of membrane lipids and lipid mediators. This is Very long chain fatty acid elongase 7 from Mus musculus (Mouse).